Reading from the N-terminus, the 291-residue chain is 4-hydroxy-tetrahydrodipicolinate synthase (291 aa).

Thr44 provides a ligand contact to pyruvate. Tyr132 acts as the Proton donor/acceptor in catalysis. Lys160 serves as the catalytic Schiff-base intermediate with substrate. Ile202 is a pyruvate binding site.

This sequence belongs to the DapA family. As to quaternary structure, homotetramer; dimer of dimers.

It localises to the cytoplasm. It carries out the reaction L-aspartate 4-semialdehyde + pyruvate = (2S,4S)-4-hydroxy-2,3,4,5-tetrahydrodipicolinate + H2O + H(+). Its pathway is amino-acid biosynthesis; L-lysine biosynthesis via DAP pathway; (S)-tetrahydrodipicolinate from L-aspartate: step 3/4. In terms of biological role, catalyzes the condensation of (S)-aspartate-beta-semialdehyde [(S)-ASA] and pyruvate to 4-hydroxy-tetrahydrodipicolinate (HTPA). The sequence is that of 4-hydroxy-tetrahydrodipicolinate synthase from Rhizorhabdus wittichii (strain DSM 6014 / CCUG 31198 / JCM 15750 / NBRC 105917 / EY 4224 / RW1) (Sphingomonas wittichii).